Reading from the N-terminus, the 480-residue chain is Glycogen synthase (480 aa).

Lys15 contributes to the ADP-alpha-D-glucose binding site.

The protein belongs to the glycosyltransferase 1 family. Bacterial/plant glycogen synthase subfamily.

The enzyme catalyses [(1-&gt;4)-alpha-D-glucosyl](n) + ADP-alpha-D-glucose = [(1-&gt;4)-alpha-D-glucosyl](n+1) + ADP + H(+). The protein operates within glycan biosynthesis; glycogen biosynthesis. In terms of biological role, synthesizes alpha-1,4-glucan chains using ADP-glucose. In Granulibacter bethesdensis (strain ATCC BAA-1260 / CGDNIH1), this protein is Glycogen synthase.